A 672-amino-acid polypeptide reads, in one-letter code: Spermatid perinuclear RNA-binding protein (672 aa).

Residues 5–362 (RSFANDDRHV…ALKRPFEDGV (358 aa)) form the DZF domain. The interval 348–370 (GTGSSALKRPFEDGVGDDKDPNK) is disordered. A compositionally biased stretch (basic and acidic residues) spans 356-370 (RPFEDGVGDDKDPNK). The DRBM 1 domain maps to 386–452 (DLMNALMRLN…AVKVLQAMGY (67 aa)). Residues 463 to 494 (VSSDEKSDNEGKNETVSSISSNNTGNSTADTS) form a disordered region. Residues 465–475 (SDEKSDNEGKN) show a composition bias toward basic and acidic residues. The span at 477 to 490 (TVSSISSNNTGNST) shows a compositional bias: low complexity. The DRBM 2 domain maps to 509–575 (SGKNPVMELN…ALAALEKLFS (67 aa)).

Its subcellular location is the cytoplasm. In terms of biological role, may be involved in normal spermatogenesis and sperm function. Binds to double-stranded DNA and RNA. In Gallus gallus (Chicken), this protein is Spermatid perinuclear RNA-binding protein (STRBP).